Consider the following 79-residue polypeptide: DNA-directed RNA polymerase subunit omega (79 aa).

It belongs to the RNA polymerase subunit omega family. In terms of assembly, in cyanobacteria the RNAP catalytic core is composed of 2 alpha, 1 beta, 1 beta', 1 gamma and 1 omega subunit. When a sigma factor is associated with the core the holoenzyme is formed, which can initiate transcription.

It carries out the reaction RNA(n) + a ribonucleoside 5'-triphosphate = RNA(n+1) + diphosphate. Promotes RNA polymerase assembly. Latches the N- and C-terminal regions of the beta' subunit thereby facilitating its interaction with the beta and alpha subunits. In Synechococcus sp. (strain JA-3-3Ab) (Cyanobacteria bacterium Yellowstone A-Prime), this protein is DNA-directed RNA polymerase subunit omega.